A 435-amino-acid polypeptide reads, in one-letter code: GTPase Der (435 aa).

2 consecutive EngA-type G domains span residues 4 to 167 and 175 to 350; these read PVVA…GDKA and IRFS…ENQT. GTP contacts are provided by residues 10–17, 57–61, 119–122, 181–188, 228–232, and 293–296; these read GRPNVGKS, DTGGI, NKAD, DTAGI, and NKWD. The KH-like domain maps to 351–435; sequence RRIQSSVLND…PIKILARKRK (85 aa).

This sequence belongs to the TRAFAC class TrmE-Era-EngA-EngB-Septin-like GTPase superfamily. EngA (Der) GTPase family. As to quaternary structure, associates with the 50S ribosomal subunit.

Its function is as follows. GTPase that plays an essential role in the late steps of ribosome biogenesis. This is GTPase Der from Lactobacillus johnsonii (strain CNCM I-12250 / La1 / NCC 533).